Reading from the N-terminus, the 504-residue chain is ATP synthase subunit alpha (504 aa).

Residue Gly-171 to Thr-178 participates in ATP binding.

The protein belongs to the ATPase alpha/beta chains family. In terms of assembly, F-type ATPases have 2 components, CF(1) - the catalytic core - and CF(0) - the membrane proton channel. CF(1) has five subunits: alpha(3), beta(3), gamma(1), delta(1), epsilon(1). CF(0) has three main subunits: a(1), b(2) and c(9-12). The alpha and beta chains form an alternating ring which encloses part of the gamma chain. CF(1) is attached to CF(0) by a central stalk formed by the gamma and epsilon chains, while a peripheral stalk is formed by the delta and b chains.

It is found in the cell inner membrane. The enzyme catalyses ATP + H2O + 4 H(+)(in) = ADP + phosphate + 5 H(+)(out). Functionally, produces ATP from ADP in the presence of a proton gradient across the membrane. The alpha chain is a regulatory subunit. The sequence is that of ATP synthase subunit alpha from Sulfurovum sp. (strain NBC37-1).